A 210-amino-acid polypeptide reads, in one-letter code: Small ribosomal subunit protein uS3 (210 aa).

Positions 39–107 (IREKLMEKLK…EILLDIQEVK (69 aa)) constitute a KH type-2 domain.

The protein belongs to the universal ribosomal protein uS3 family. In terms of assembly, part of the 30S ribosomal subunit. Forms a tight complex with proteins S10 and S14.

Its function is as follows. Binds the lower part of the 30S subunit head. Binds mRNA in the 70S ribosome, positioning it for translation. The chain is Small ribosomal subunit protein uS3 from Opitutus terrae (strain DSM 11246 / JCM 15787 / PB90-1).